Here is a 353-residue protein sequence, read N- to C-terminus: Protein disulfide isomerase CRELD2 (353 aa).

Positions 1 to 24 are cleaved as a signal peptide; that stretch reads MRLPRRAALGLLPLLLLLPPAPEA. The short motif at 31 to 34 is the CXXC element; sequence CHRC. Disulfide bonds link Cys31-Cys34, Cys140-Cys154, Cys148-Cys166, and Cys168-Cys177. The region spanning 136–178 is the EGF-like 1 domain; it reads DCLACQGGSQRPCSGNGHCSGDGSRQGDGSCRCHMGYQGPLCT. The FU 1 repeat unit spans residues 193-240; it reads HSICTACDESCKTCSGLTNRDCGECEVGWVLDEGACVDVDECAAEPPP. N-linked (GlcNAc...) asparagine glycosylation is present at Asn251. The stretch at 253 to 302 is one FU 2 repeat; sequence SYTCEECDSSCVGCTGEGPGNCKECISGYAREHGQCADVDECSLAEKTCV. The short motif at 263-266 is the CXXC element; it reads CVGC. Disulfide bonds link Cys263–Cys266, Cys294–Cys308, Cys301–Cys317, and Cys319–Cys330. The 42-residue stretch at 290 to 331 folds into the EGF-like 2; calcium-binding domain; it reads DVDECSLAEKTCVRKNENCYNTPGSYVCVCPDGFEETEDACV. Residues 332–353 form a disordered region; that stretch reads PPAEAEATEGESPTQLPSREDL. A compositionally biased stretch (polar residues) spans 342-353; it reads ESPTQLPSREDL.

Belongs to the CRELD family. In terms of assembly, interacts with CHRNA4. Component of a complex containing at least CRELD2, MANF, MATN3 and PDIA4. As to expression, ubiquitously expressed. Highly expressed in skeletal muscle, heart, liver, kidney and placenta.

Its subcellular location is the endoplasmic reticulum. It catalyses the reaction Catalyzes the rearrangement of -S-S- bonds in proteins.. Protein disulfide isomerase. Might play a role in the unfolded protein response. May regulate transport of alpha4-beta2 neuronal acetylcholine receptor. The protein is Protein disulfide isomerase CRELD2 (CRELD2) of Homo sapiens (Human).